Here is an 856-residue protein sequence, read N- to C-terminus: Structure-specific endonuclease subunit SLX4 (856 aa).

A compositionally biased stretch (polar residues) spans 1–19 (MDNAAIASQSNTPPSNGRS). Disordered stretches follow at residues 1–24 (MDNA…ARFV), 39–61 (IEPS…SKSP), 88–121 (VDSP…HKMA), 139–201 (KTRK…TDNE), 296–326 (GIQT…KKPQ), 362–392 (KKMG…GNGP), 621–640 (SKSS…SQGD), 653–688 (RSDS…SNEG), and 715–742 (DSVG…QDCD). Residues 51-60 (STLLTSLSKS) are compositionally biased toward low complexity. A compositionally biased stretch (basic residues) spans 139-152 (KTRKKKAATAKRTR). Residues 296 to 309 (GIQTPTESRPATND) are compositionally biased toward polar residues. Positions 673-686 (SVKSQESKSFSLSN) are enriched in polar residues.

It belongs to the SLX4 family. Forms a heterodimer with SLX1. In terms of processing, phosphorylated in response to DNA damage.

The protein localises to the nucleus. Functionally, regulatory subunit of the SLX1-SLX4 structure-specific endonuclease that resolves DNA secondary structures generated during DNA repair and recombination. Has endonuclease activity towards branched DNA substrates, introducing single-strand cuts in duplex DNA close to junctions with ss-DNA. The protein is Structure-specific endonuclease subunit SLX4 of Ajellomyces dermatitidis (strain ER-3 / ATCC MYA-2586) (Blastomyces dermatitidis).